We begin with the raw amino-acid sequence, 486 residues long: Ribulose bisphosphate carboxylase large chain (486 aa).

Positions 126 and 176 each coordinate substrate. Residue lysine 178 is the Proton acceptor of the active site. Lysine 180 serves as a coordination point for substrate. The Mg(2+) site is built by lysine 204, aspartate 206, and glutamate 207. Lysine 204 is modified (N6-carboxylysine). Histidine 296 acts as the Proton acceptor in catalysis. Substrate contacts are provided by arginine 297, histidine 329, and serine 381.

Belongs to the RuBisCO large chain family. Type I subfamily. Heterohexadecamer of 8 large chains and 8 small chains. Requires Mg(2+) as cofactor.

It catalyses the reaction 2 (2R)-3-phosphoglycerate + 2 H(+) = D-ribulose 1,5-bisphosphate + CO2 + H2O. The enzyme catalyses D-ribulose 1,5-bisphosphate + O2 = 2-phosphoglycolate + (2R)-3-phosphoglycerate + 2 H(+). In terms of biological role, ruBisCO catalyzes two reactions: the carboxylation of D-ribulose 1,5-bisphosphate, the primary event in carbon dioxide fixation, as well as the oxidative fragmentation of the pentose substrate. Both reactions occur simultaneously and in competition at the same active site. In Rhizobium meliloti (strain 1021) (Ensifer meliloti), this protein is Ribulose bisphosphate carboxylase large chain.